A 249-amino-acid chain; its full sequence is ATP synthase subunit a, chloroplastic (249 aa).

5 consecutive transmembrane segments (helical) span residues glutamine 40 to valine 60, valine 97 to leucine 117, isoleucine 136 to serine 156, leucine 201 to leucine 221, and glycine 222 to glycine 242.

This sequence belongs to the ATPase A chain family. As to quaternary structure, F-type ATPases have 2 components, CF(1) - the catalytic core - and CF(0) - the membrane proton channel. CF(1) has five subunits: alpha(3), beta(3), gamma(1), delta(1), epsilon(1). CF(0) has four main subunits: a, b, b' and c.

It localises to the plastid. The protein resides in the chloroplast thylakoid membrane. In terms of biological role, key component of the proton channel; it plays a direct role in the translocation of protons across the membrane. This chain is ATP synthase subunit a, chloroplastic, found in Arabis hirsuta (Hairy rock-cress).